A 305-amino-acid polypeptide reads, in one-letter code: Endonuclease III-like protein 1 (305 aa).

Residues Met-1–Lys-28 constitute a mitochondrion transit peptide. Positions Met-1 to Gln-83 are disordered. Ser-64 carries the phosphoserine modification. The region spanning Arg-192–His-216 is the HhH domain. The Nucleophile; for N-glycosylase activity role is filled by Lys-213. [4Fe-4S] cluster contacts are provided by Cys-283, Cys-290, Cys-293, and Cys-299.

Belongs to the Nth/MutY family. Interacts with YBX1. Interacts with ERCC5/XPG; the interaction stimulates NTHL1 activity and NTHL1 binding to its DNA substrate. [4Fe-4S] cluster is required as a cofactor.

It localises to the nucleus. The protein resides in the mitochondrion. It catalyses the reaction 2'-deoxyribonucleotide-(2'-deoxyribose 5'-phosphate)-2'-deoxyribonucleotide-DNA = a 3'-end 2'-deoxyribonucleotide-(2,3-dehydro-2,3-deoxyribose 5'-phosphate)-DNA + a 5'-end 5'-phospho-2'-deoxyribonucleoside-DNA + H(+). Its function is as follows. Bifunctional DNA N-glycosylase with associated apurinic/apyrimidinic (AP) lyase function that catalyzes the first step in base excision repair (BER), the primary repair pathway for the repair of oxidative DNA damage. The DNA N-glycosylase activity releases the damaged DNA base from DNA by cleaving the N-glycosidic bond, leaving an AP site. The AP lyase activity cleaves the phosphodiester bond 3' to the AP site by a beta-elimination. Primarily recognizes and repairs oxidative base damage of pyrimidines. The polypeptide is Endonuclease III-like protein 1 (Bos taurus (Bovine)).